We begin with the raw amino-acid sequence, 693 residues long: Translation initiation factor IF-2 (693 aa).

Residues 181–349 (PRPPVVTVMG…MILLVAEMNE (169 aa)) enclose the tr-type G domain. The interval 190–197 (GHVDHGKT) is G1. 190–197 (GHVDHGKT) lines the GTP pocket. The interval 215–219 (GITQS) is G2. The tract at residues 236–239 (DTPG) is G3. GTP is bound by residues 236–240 (DTPGH) and 290–293 (NKID). Positions 290 to 293 (NKID) are G4. Positions 327–329 (SAR) are G5.

This sequence belongs to the TRAFAC class translation factor GTPase superfamily. Classic translation factor GTPase family. IF-2 subfamily.

Its subcellular location is the cytoplasm. One of the essential components for the initiation of protein synthesis. Protects formylmethionyl-tRNA from spontaneous hydrolysis and promotes its binding to the 30S ribosomal subunits. Also involved in the hydrolysis of GTP during the formation of the 70S ribosomal complex. This Thermotoga petrophila (strain ATCC BAA-488 / DSM 13995 / JCM 10881 / RKU-1) protein is Translation initiation factor IF-2.